A 148-amino-acid chain; its full sequence is 3-dehydroquinate dehydratase (148 aa).

Y23 (proton acceptor) is an active-site residue. N75, H81, and D88 together coordinate substrate. H101 acts as the Proton donor in catalysis. Residues 102–103 (IS) and R112 contribute to the substrate site.

The protein belongs to the type-II 3-dehydroquinase family. Homododecamer.

The enzyme catalyses 3-dehydroquinate = 3-dehydroshikimate + H2O. Its pathway is metabolic intermediate biosynthesis; chorismate biosynthesis; chorismate from D-erythrose 4-phosphate and phosphoenolpyruvate: step 3/7. Catalyzes a trans-dehydration via an enolate intermediate. The protein is 3-dehydroquinate dehydratase of Methylococcus capsulatus (strain ATCC 33009 / NCIMB 11132 / Bath).